The sequence spans 425 residues: COP9 signalosome complex subunit 1 (425 aa).

In terms of domain architecture, PCI spans 219–379 (ASSGVPPEIY…KSKALQTLEN (161 aa)).

Belongs to the CSN1 family. In terms of assembly, component of the COP9 signalosome (CSN) complex.

It localises to the cytoplasm. The protein localises to the nucleus. In terms of biological role, component of the COP9 signalosome (CSN) complex that acts as an regulator of the ubiquitin (Ubl) conjugation pathway by mediating the deneddylation of the cullin subunit of SCF-type E3 ubiquitin-protein ligase complexes. The CSN complex is involved in the regulation of the circadian clock through its control of the stability of the SCF(FWD-1) complex. In Neurospora crassa (strain ATCC 24698 / 74-OR23-1A / CBS 708.71 / DSM 1257 / FGSC 987), this protein is COP9 signalosome complex subunit 1 (csn-1).